Here is a 446-residue protein sequence, read N- to C-terminus: Glutamyl-tRNA reductase (446 aa).

Substrate-binding positions include 49–52, Ser-109, 114–116, and Gln-120; these read TCNR and ETQ. Cys-50 (nucleophile) is an active-site residue. 189–194 lines the NADP(+) pocket; the sequence is GAGKMG.

Belongs to the glutamyl-tRNA reductase family. In terms of assembly, homodimer.

The enzyme catalyses (S)-4-amino-5-oxopentanoate + tRNA(Glu) + NADP(+) = L-glutamyl-tRNA(Glu) + NADPH + H(+). Its pathway is porphyrin-containing compound metabolism; protoporphyrin-IX biosynthesis; 5-aminolevulinate from L-glutamyl-tRNA(Glu): step 1/2. Catalyzes the NADPH-dependent reduction of glutamyl-tRNA(Glu) to glutamate 1-semialdehyde (GSA). The polypeptide is Glutamyl-tRNA reductase (Priestia megaterium (Bacillus megaterium)).